A 397-amino-acid chain; its full sequence is CCA-adding enzyme (397 aa).

Positions 26 and 29 each coordinate ATP. Gly-26 and Arg-29 together coordinate CTP. Residues Asp-39 and Asp-41 each contribute to the Mg(2+) site. The ATP site is built by Arg-110, Asp-153, Arg-156, Arg-159, and Arg-162. 5 residues coordinate CTP: Arg-110, Asp-153, Arg-156, Arg-159, and Arg-162.

It belongs to the tRNA nucleotidyltransferase/poly(A) polymerase family. Bacterial CCA-adding enzyme type 3 subfamily. Homodimer. Mg(2+) serves as cofactor.

It catalyses the reaction a tRNA precursor + 2 CTP + ATP = a tRNA with a 3' CCA end + 3 diphosphate. It carries out the reaction a tRNA with a 3' CCA end + 2 CTP + ATP = a tRNA with a 3' CCACCA end + 3 diphosphate. In terms of biological role, catalyzes the addition and repair of the essential 3'-terminal CCA sequence in tRNAs without using a nucleic acid template. Adds these three nucleotides in the order of C, C, and A to the tRNA nucleotide-73, using CTP and ATP as substrates and producing inorganic pyrophosphate. tRNA 3'-terminal CCA addition is required both for tRNA processing and repair. Also involved in tRNA surveillance by mediating tandem CCA addition to generate a CCACCA at the 3' terminus of unstable tRNAs. While stable tRNAs receive only 3'-terminal CCA, unstable tRNAs are marked with CCACCA and rapidly degraded. The sequence is that of CCA-adding enzyme from Bacillus cereus (strain Q1).